We begin with the raw amino-acid sequence, 288 residues long: MEILRLAQSKKNIISLNMDLERDMQRIDEANQELLLEIQEKENEIQRLEHEITQTGNPAEDEEWEKENYTVMEREQALQELEEETARLERKNETLVHSISELQRKLTRKSQKVIRYEQGDLETTPEESKVKLQQLESSCADQEKELGKIMEDYVFVSQLCEDQALCIKKYQEALKRIEEELETGYLEREVSKVLSMDSERERSTSLNKMDGFISKGALRFSKSIFRSLLFSTLFFIRLLGYLIFHLSFINPDLLVNALPKILSRDVLWKLRCFLFPSLTLETEDMLPH.

A coiled-coil region spans residues 10–189; it reads KKNIISLNMD…ELETGYLERE (180 aa). Residues 227-249 traverse the membrane as a helical segment; it reads SLLFSTLFFIRLLGYLIFHLSFI.

The protein belongs to the TMCO5 family. In terms of tissue distribution, only detected in testis (at protein level).

The protein localises to the endoplasmic reticulum membrane. Its subcellular location is the nucleus membrane. This chain is Transmembrane and coiled-coil domain-containing protein 5A (Tmco5a), found in Mus musculus (Mouse).